Consider the following 173-residue polypeptide: Putative phosphoesterase GWCH70_0799 (173 aa).

Residue histidine 34 is the Proton donor of the active site. Short sequence motifs (HXTX) lie at residues 34–37 (HLTL) and 115–118 (HITI). Catalysis depends on histidine 115, which acts as the Proton acceptor.

The protein belongs to the 2H phosphoesterase superfamily. YjcG family.

The chain is Putative phosphoesterase GWCH70_0799 from Geobacillus sp. (strain WCH70).